The chain runs to 74 residues: Ferredoxin MycCII (74 aa).

In terms of domain architecture, 4Fe-4S ferredoxin-type spans 1 to 29; sequence MRIVLDAERCVGAGQCEATAPELFTQGDD. The [3Fe-4S] cluster site is built by Cys-10, Cys-16, and Cys-54.

[3Fe-4S] cluster serves as cofactor.

It functions in the pathway antibiotic biosynthesis; mycinamicin biosynthesis. Its function is as follows. Specific electron transport protein capable of effectively supporting cytochrome P450 MycCI activity in the biosynthesis of mycinamicin, a 16-membered macrolide antibiotic. This Micromonospora griseorubida protein is Ferredoxin MycCII.